Here is a 441-residue protein sequence, read N- to C-terminus: Chitinase-like protein Idgf3 (441 aa).

Positions 1–23 (MSGSLWLSLALSLAVLAQFKVSA) are cleaved as a signal peptide. Residues 25–441 (PNLVCFYDSQ…MLRAIKYRLL (417 aa)) form the GH18 domain. C29 and C56 are oxidised to a cystine. N221 is a glycosylation site (N-linked (GlcNAc...) asparagine). A disordered region spans residues 310–331 (GDSGMPVVSSTQGPAPAGPQSK). A disulfide bridge links C342 with C425.

It belongs to the glycosyl hydrolase 18 family. IDGF subfamily. Post-translationally, glycosylated.

It localises to the secreted. Cooperates with insulin-like peptides to stimulate the proliferation, polarization and motility of imaginal disk cells. May act by stabilizing the binding of insulin-like peptides to its receptor through a simultaneous interaction with both molecules to form a multiprotein signaling complex. The polypeptide is Chitinase-like protein Idgf3 (Idgf3) (Drosophila simulans (Fruit fly)).